The chain runs to 316 residues: Apolipoprotein E (316 aa).

The N-terminal stretch at 1-18 (MKALWAVLVVTLLAGCLA) is a signal peptide. Tandem repeats lie at residues 76–97 (VLME…EQMG), 98–119 (PMAE…SRLG), 120–141 (ADME…TMLG), 142–163 (QSTE…KRLM), 164–185 (RDAE…EGAE), 186–207 (RGVG…QRTA), 208–229 (NLGA…ARIR), and 230–251 (GRLE…EQME). An 8 X 22 AA approximate tandem repeats region spans residues 76–251 (VLMEDTMTEL…RLEEVREQME (176 aa)). At M139 the chain carries Methionine sulfoxide. S143 carries the phosphoserine modification. Residues 154 to 164 (HLRKLRKRLMR) form an LDL and other lipoprotein receptors binding region. Heparin is bound at residue 158–161 (LRKR). The lipid-binding and lipoprotein association stretch occupies residues 206–286 (TANLGAGAAQ…GWFEPLVEDM (81 aa)). A heparin-binding site is contributed by 225–232 (GARIRGRL). The homooligomerization stretch occupies residues 262-316 (QQMRLQAEIFQTRLKGWFEPLVEDMQRQWANLMEKIQASVATNPIPPSSVPQESQ). The tract at residues 274–286 (RLKGWFEPLVEDM) is specificity for association with VLDL.

This sequence belongs to the apolipoprotein A1/A4/E family. In terms of assembly, homotetramer. May interact with ABCA1; functionally associated with ABCA1 in the biogenesis of HDLs. May interact with APP/A4 amyloid-beta peptide; the interaction is extremely stable in vitro but its physiological significance is unclear. May interact with MAPT. May interact with MAP2. In the cerebrospinal fluid, interacts with secreted SORL1. Interacts with PMEL; this allows the loading of PMEL luminal fragment on ILVs to induce fibril nucleation. APOE exists as multiple glycosylated and sialylated glycoforms within cells and in plasma. The extent of glycosylation and sialylation are tissue and context specific. In terms of processing, glycated in plasma VLDL. Post-translationally, phosphorylated by FAM20C in the extracellular medium.

The protein resides in the secreted. Its subcellular location is the extracellular space. The protein localises to the extracellular matrix. It is found in the extracellular vesicle. It localises to the endosome. The protein resides in the multivesicular body. APOE is an apolipoprotein, a protein associating with lipid particles, that mainly functions in lipoprotein-mediated lipid transport between organs via the plasma and interstitial fluids. APOE is a core component of plasma lipoproteins and is involved in their production, conversion and clearance. Apolipoproteins are amphipathic molecules that interact both with lipids of the lipoprotein particle core and the aqueous environment of the plasma. As such, APOE associates with chylomicrons, chylomicron remnants, very low density lipoproteins (VLDL) and intermediate density lipoproteins (IDL) but shows a preferential binding to high-density lipoproteins (HDL). It also binds a wide range of cellular receptors including the LDL receptor/LDLR, the LDL receptor-related proteins LRP1, LRP2 and LRP8 and the very low-density lipoprotein receptor/VLDLR that mediate the cellular uptake of the APOE-containing lipoprotein particles. Finally, APOE also has a heparin-binding activity and binds heparan-sulfate proteoglycans on the surface of cells, a property that supports the capture and the receptor-mediated uptake of APOE-containing lipoproteins by cells. A main function of APOE is to mediate lipoprotein clearance through the uptake of chylomicrons, VLDLs, and HDLs by hepatocytes. APOE is also involved in the biosynthesis by the liver of VLDLs as well as their uptake by peripheral tissues ensuring the delivery of triglycerides and energy storage in muscle, heart and adipose tissues. By participating in the lipoprotein-mediated distribution of lipids among tissues, APOE plays a critical role in plasma and tissues lipid homeostasis. APOE is also involved in two steps of reverse cholesterol transport, the HDLs-mediated transport of cholesterol from peripheral tissues to the liver, and thereby plays an important role in cholesterol homeostasis. First, it is functionally associated with ABCA1 in the biogenesis of HDLs in tissues. Second, it is enriched in circulating HDLs and mediates their uptake by hepatocytes. APOE also plays an important role in lipid transport in the central nervous system, regulating neuron survival and sprouting. The polypeptide is Apolipoprotein E (APOE) (Microtus ochrogaster (Prairie vole)).